A 151-amino-acid chain; its full sequence is Large ribosomal subunit protein bL9 (151 aa).

It belongs to the bacterial ribosomal protein bL9 family.

Functionally, binds to the 23S rRNA. This chain is Large ribosomal subunit protein bL9, found in Chlorobium chlorochromatii (strain CaD3).